A 115-amino-acid polypeptide reads, in one-letter code: Holo-[acyl-carrier-protein] synthase (115 aa).

Mg(2+)-binding residues include aspartate 6 and glutamate 51.

Belongs to the P-Pant transferase superfamily. AcpS family. The cofactor is Mg(2+).

It localises to the cytoplasm. The catalysed reaction is apo-[ACP] + CoA = holo-[ACP] + adenosine 3',5'-bisphosphate + H(+). In terms of biological role, transfers the 4'-phosphopantetheine moiety from coenzyme A to a Ser of acyl-carrier-protein. This Campylobacter jejuni subsp. jejuni serotype O:2 (strain ATCC 700819 / NCTC 11168) protein is Holo-[acyl-carrier-protein] synthase.